Consider the following 483-residue polypeptide: PAT complex subunit CCDC47 (483 aa).

A signal peptide spans 1–20 (MKAFYAFCVVLLVFGSVSEA). The Cytoplasmic portion of the chain corresponds to 21–135 (KFDDFEDEED…PAHLQNSWES (115 aa)). The segment at 46-119 (MEDSVTESPQ…DTSSNKNKDP (74 aa)) is disordered. Positions 60 to 104 (TEDDEDEATVELEGQDESQEGDFEDADTQEGDTESEPYDDEEFEG) are enriched in acidic residues. A compositionally biased stretch (basic and acidic residues) spans 105-118 (YEDKPDTSSNKNKD). The chain crosses the membrane as a helical span at residues 136–156 (YYLEILMVTGLLAYIMNYIIG). Residues 157 to 483 (KNKNSRLAQA…KMKQIKVKAM (327 aa)) are Lumenal-facing. N-linked (GlcNAc...) asparagine glycosylation is present at Asn-178. Residues 424–483 (QRQEAAQSRREEKKRAEKERIMNEEDPEKQRRLEEAALRREQKKLEKKQMKMKQIKVKAM) are disordered. A compositionally biased stretch (basic and acidic residues) spans 430–472 (QSRREEKKRAEKERIMNEEDPEKQRRLEEAALRREQKKLEKKQ). A coiled-coil region spans residues 450 to 483 (PEKQRRLEEAALRREQKKLEKKQMKMKQIKVKAM). Over residues 473–483 (MKMKQIKVKAM) the composition is skewed to basic residues.

It belongs to the CCDC47 family. In terms of assembly, component of the PAT complex, composed of WDR83OS/Asterix and CCDC47. The PAT complex is part of the multi-pass translocon (MPT) complex, composed of three subcomplexes, the GEL complex (composed of RAB5IF/OPTI and TMCO1), the BOS complex (composed of NCLN/Nicalin, NOMO1 and TMEM147) and the PAT complex (composed of WDR83OS/Asterix and CCDC47). The MPT complex associates with the SEC61 complex. Interacts with VCP, HSPA5, DERL1, DERL2 and SELENOS. In terms of tissue distribution, in the embryo, expressed in the endodermal layer of the yolk sac and in the small intestine.

The protein resides in the endoplasmic reticulum membrane. It localises to the rough endoplasmic reticulum membrane. Component of the multi-pass translocon (MPT) complex that mediates insertion of multi-pass membrane proteins into the lipid bilayer of membranes. The MPT complex takes over after the SEC61 complex: following membrane insertion of the first few transmembrane segments of proteins by the SEC61 complex, the MPT complex occludes the lateral gate of the SEC61 complex to promote insertion of subsequent transmembrane regions. Within the MPT complex, the PAT subcomplex sequesters any highly polar regions in the transmembrane domains away from the non-polar membrane environment until they can be buried in the interior of the fully assembled protein. Within the PAT subcomplex, CCDC47 occludes the lateral gate of the SEC61 complex. Involved in the regulation of calcium ion homeostasis in the ER. Required for proper protein degradation via the ERAD (ER-associated degradation) pathway. Has an essential role in the maintenance of ER organization during embryogenesis. This Mus musculus (Mouse) protein is PAT complex subunit CCDC47.